The primary structure comprises 375 residues: Anhydro-N-acetylmuramic acid kinase (375 aa).

13-20 contributes to the ATP binding site; the sequence is GTSMDGVD.

This sequence belongs to the anhydro-N-acetylmuramic acid kinase family.

The enzyme catalyses 1,6-anhydro-N-acetyl-beta-muramate + ATP + H2O = N-acetyl-D-muramate 6-phosphate + ADP + H(+). It participates in amino-sugar metabolism; 1,6-anhydro-N-acetylmuramate degradation. It functions in the pathway cell wall biogenesis; peptidoglycan recycling. In terms of biological role, catalyzes the specific phosphorylation of 1,6-anhydro-N-acetylmuramic acid (anhMurNAc) with the simultaneous cleavage of the 1,6-anhydro ring, generating MurNAc-6-P. Is required for the utilization of anhMurNAc either imported from the medium or derived from its own cell wall murein, and thus plays a role in cell wall recycling. This is Anhydro-N-acetylmuramic acid kinase from Pelagibacter ubique (strain HTCC1062).